Consider the following 305-residue polypeptide: Dihydroorotate dehydrogenase B (NAD(+)), catalytic subunit (305 aa).

FMN contacts are provided by residues S23 and K47–G48. Substrate is bound by residues K47 and N71–L75. FMN contacts are provided by N101 and N129. N129 is a binding site for substrate. C132 functions as the Nucleophile in the catalytic mechanism. FMN-binding residues include K167 and I193. A substrate-binding site is contributed by N194 to T195. Residues G219, G245 to G246, and G267 to T268 contribute to the FMN site.

This sequence belongs to the dihydroorotate dehydrogenase family. Type 1 subfamily. Heterotetramer of 2 PyrK and 2 PyrD type B subunits. It depends on FMN as a cofactor.

It is found in the cytoplasm. It catalyses the reaction (S)-dihydroorotate + NAD(+) = orotate + NADH + H(+). Its pathway is pyrimidine metabolism; UMP biosynthesis via de novo pathway; orotate from (S)-dihydroorotate (NAD(+) route): step 1/1. Catalyzes the conversion of dihydroorotate to orotate with NAD(+) as electron acceptor. The polypeptide is Dihydroorotate dehydrogenase B (NAD(+)), catalytic subunit (pyrD) (Geobacter sulfurreducens (strain ATCC 51573 / DSM 12127 / PCA)).